The primary structure comprises 465 residues: Putrescine aminotransferase (465 aa).

Residues 150–151 (GT) and Q274 each bind pyridoxal 5'-phosphate. K300 carries the post-translational modification N6-(pyridoxal phosphate)lysine. T332 provides a ligand contact to pyridoxal 5'-phosphate.

It belongs to the class-III pyridoxal-phosphate-dependent aminotransferase family. Putrescine aminotransferase subfamily. Requires pyridoxal 5'-phosphate as cofactor.

It carries out the reaction an alkane-alpha,omega-diamine + 2-oxoglutarate = an omega-aminoaldehyde + L-glutamate. The catalysed reaction is putrescine + 2-oxoglutarate = 1-pyrroline + L-glutamate + H2O. It catalyses the reaction cadaverine + 2-oxoglutarate = 5-aminopentanal + L-glutamate. It participates in amine and polyamine degradation; putrescine degradation; 4-aminobutanal from putrescine (transaminase route): step 1/1. Catalyzes the aminotransferase reaction from putrescine to 2-oxoglutarate, leading to glutamate and 4-aminobutanal, which spontaneously cyclizes to form 1-pyrroline. This is the first step in one of two pathways for putrescine degradation, where putrescine is converted into 4-aminobutanoate (gamma-aminobutyrate or GABA) via 4-aminobutanal. Also functions as a cadaverine transaminase in a a L-lysine degradation pathway to succinate that proceeds via cadaverine, glutarate and L-2-hydroxyglutarate. The chain is Putrescine aminotransferase from Cronobacter sakazakii (strain ATCC BAA-894) (Enterobacter sakazakii).